The primary structure comprises 374 residues: Cysteine-type anaerobic sulfatase-maturating enzyme (374 aa).

The Radical SAM core domain occupies 1–227 (MKSLSMLIKP…LNKLFDLWFK (227 aa)). 2 residues coordinate [4Fe-4S] cluster: C15 and C19. Y21 provides a ligand contact to S-adenosyl-L-methionine. C22 contacts [4Fe-4S] cluster. Residues G66, S122, R134, and L195 each contribute to the S-adenosyl-L-methionine site. [4Fe-4S] cluster is bound by residues C255, C261, and C276. The active-site Proton acceptor is the D277. C317, C320, C326, C330, and C348 together coordinate [4Fe-4S] cluster.

Belongs to the radical SAM superfamily. Anaerobic sulfatase-maturating enzyme family. [4Fe-4S] cluster is required as a cofactor.

The catalysed reaction is L-cysteinyl-[sulfatase] + S-adenosyl-L-methionine + H2O = 3-oxo-L-alanyl-[sulfatase] + hydrogen sulfide + 5'-deoxyadenosine + L-methionine + 2 H(+). It functions in the pathway protein modification; sulfatase oxidation. Functionally, involved in 'Cys-type' sulfatase maturation under anaerobic conditions. Catalyzes the post-translational modification of cysteine into 3-oxoalanine (also known as C(alpha)-formylglycine (FGly)), by a free radical chemical mechanism initiated via the reductive cleavage of S-adenosyl-L-methionine (SAM). The chain is Cysteine-type anaerobic sulfatase-maturating enzyme from Clostridium novyi (strain NT).